A 292-amino-acid chain; its full sequence is ATP synthase gamma chain (292 aa).

Belongs to the ATPase gamma chain family. As to quaternary structure, F-type ATPases have 2 components, CF(1) - the catalytic core - and CF(0) - the membrane proton channel. CF(1) has five subunits: alpha(3), beta(3), gamma(1), delta(1), epsilon(1). CF(0) has three main subunits: a, b and c.

Its subcellular location is the cell inner membrane. Produces ATP from ADP in the presence of a proton gradient across the membrane. The gamma chain is believed to be important in regulating ATPase activity and the flow of protons through the CF(0) complex. This is ATP synthase gamma chain from Bradyrhizobium sp. (strain ORS 278).